Here is a 519-residue protein sequence, read N- to C-terminus: Steroid 17-alpha-hydroxylase/17,20 lyase (519 aa).

Position 455 (cysteine 455) interacts with heme.

The protein belongs to the cytochrome P450 family. It depends on heme as a cofactor.

It is found in the membrane. It carries out the reaction a C21-steroid + reduced [NADPH--hemoprotein reductase] + O2 = a 17alpha-hydroxy-C21-steroid + oxidized [NADPH--hemoprotein reductase] + H2O + H(+). The enzyme catalyses 17alpha-hydroxyprogesterone + reduced [NADPH--hemoprotein reductase] + O2 = androst-4-ene-3,17-dione + acetate + oxidized [NADPH--hemoprotein reductase] + H2O + 2 H(+). The catalysed reaction is 17alpha-hydroxypregnenolone + reduced [NADPH--hemoprotein reductase] + O2 = 3beta-hydroxyandrost-5-en-17-one + acetate + oxidized [NADPH--hemoprotein reductase] + H2O + 2 H(+). It functions in the pathway lipid metabolism; steroid biosynthesis. Conversion of pregnenolone and progesterone to their 17-alpha-hydroxylated products and subsequently to dehydroepiandrosterone (DHEA) and androstenedione. Catalyzes both the 17-alpha-hydroxylation and the 17,20-lyase reaction. This is Steroid 17-alpha-hydroxylase/17,20 lyase (CYP17A1) from Rana dybowskii (Dybovsky's frog).